We begin with the raw amino-acid sequence, 134 residues long: Retinoid-binding protein 7 (134 aa).

The protein belongs to the calycin superfamily. Fatty-acid binding protein (FABP) family. Highly expressed in white adipose tissue and mammary gland.

It localises to the cytoplasm. In terms of biological role, intracellular transport of retinol. The chain is Retinoid-binding protein 7 (Rbp7) from Mus musculus (Mouse).